A 113-amino-acid chain; its full sequence is uncharacterized protein (113 aa).

The protein localises to the mitochondrion. This is an uncharacterized protein from Paramecium tetraurelia.